Reading from the N-terminus, the 264-residue chain is tRNA pseudouridine synthase A (264 aa).

Asp51 acts as the Nucleophile in catalysis. Residue Tyr109 coordinates substrate.

It belongs to the tRNA pseudouridine synthase TruA family. Homodimer.

The catalysed reaction is uridine(38/39/40) in tRNA = pseudouridine(38/39/40) in tRNA. Functionally, formation of pseudouridine at positions 38, 39 and 40 in the anticodon stem and loop of transfer RNAs. This chain is tRNA pseudouridine synthase A, found in Vibrio parahaemolyticus serotype O3:K6 (strain RIMD 2210633).